The following is a 562-amino-acid chain: MKKSLKELTGLIVAFALATLLFLYWPLYQRSVPKANNDAPVDVVLIGGGIMSVTLGTYLQELQPDWKIELFERLNGIAQESSDGWNNAGTGHSAFAELNYTPELQDGTIEIKRAIKIAEQFEISREFWSHQVRHGRLPAPTEFINATPHMSFVWGEDRIEYLRKRHNALIKNPLFYGMQFSTDPAIIQKWAPLLMEGRTQDQKVAATYMPLGTDVNFGVITRDLAKHLQDSQNFALHLDHEVTALRQNPDKTWNVTVKDLNNGQERSIKSRFVFIGAGGAALKLLQLSGIPESKDYAGFPVGGQFLSFENTAITKRHNVKAYGMAESGSPPMSVPHLDARKLDGKSIVLFGPFALYSTKFLKNGSWFDLYSSVNHHNAAGMLSVGKNNIDLVKYLMKQATLTDADRHAELLKYFPNAKPTDWTLVTAGQRVQIIKRDPDKGMILQFGTEIVMDKDHTLATLLGASPGASTSPSIMLDLLAKAFPQQMKNGWETQLKKIIPSYGQHINDSPALTNKIRRMTSETLSLPYLEVPDKSATPADPTIAPKNQHSTTYNANSEMQAL.

The tract at residues 535–562 (SATPADPTIAPKNQHSTTYNANSEMQAL) is disordered. The span at 545–562 (PKNQHSTTYNANSEMQAL) shows a compositional bias: polar residues.

The protein belongs to the MQO family. FAD is required as a cofactor.

It catalyses the reaction (S)-malate + a quinone = a quinol + oxaloacetate. Its pathway is carbohydrate metabolism; tricarboxylic acid cycle; oxaloacetate from (S)-malate (quinone route): step 1/1. This chain is Probable malate:quinone oxidoreductase, found in Xylella fastidiosa (strain M23).